The primary structure comprises 389 residues: S-adenosylmethionine synthase (389 aa).

His15 contacts ATP. Asp17 provides a ligand contact to Mg(2+). Glu43 contributes to the K(+) binding site. Glu56 and Gln99 together coordinate L-methionine. The segment at 99 to 109 (QSPDIAQGVNE) is flexible loop. ATP is bound by residues 166-168 (DAK), 234-235 (RF), Asp243, 249-250 (RK), Ala266, and Lys270. Asp243 contributes to the L-methionine binding site. An L-methionine-binding site is contributed by Lys274.

Belongs to the AdoMet synthase family. Homotetramer; dimer of dimers. Requires Mg(2+) as cofactor. It depends on K(+) as a cofactor.

It is found in the cytoplasm. It carries out the reaction L-methionine + ATP + H2O = S-adenosyl-L-methionine + phosphate + diphosphate. It participates in amino-acid biosynthesis; S-adenosyl-L-methionine biosynthesis; S-adenosyl-L-methionine from L-methionine: step 1/1. In terms of biological role, catalyzes the formation of S-adenosylmethionine (AdoMet) from methionine and ATP. The overall synthetic reaction is composed of two sequential steps, AdoMet formation and the subsequent tripolyphosphate hydrolysis which occurs prior to release of AdoMet from the enzyme. The sequence is that of S-adenosylmethionine synthase from Neisseria gonorrhoeae (strain NCCP11945).